A 310-amino-acid polypeptide reads, in one-letter code: Olfactory receptor 5P55 (310 aa).

The Extracellular portion of the chain corresponds to 1–25 (METQNHTTVTEFILLGLTESSTLRV). N-linked (GlcNAc...) asparagine glycosylation occurs at N5. A helical transmembrane segment spans residues 26–46 (ILFMVFLGIYTVTLVGNFSII). Over 47–54 (SLIRSCPQ) the chain is Cytoplasmic. A helical transmembrane segment spans residues 55–75 (LHTPMYLFLSHLAFVDIGFST). At 76-99 (SITPTMFKGFLGNRLVLSVAACIA) the chain is on the extracellular side. The cysteines at positions 97 and 189 are disulfide-linked. The chain crosses the membrane as a helical span at residues 100 to 120 (QFCITVTFGTVECFLLAVMAY). Over 121–133 (DRYVAICSPLLYS) the chain is Cytoplasmic. A helical membrane pass occupies residues 134–154 (THMSPRICFLLVGASYVGGCV). Over 155–196 (NSGAFTSCLSILSFCGPNQIDHFFCDFPAVLKLSCSDVSIIG) the chain is Extracellular. The chain crosses the membrane as a helical span at residues 197–217 (IIPSISAGSIIVITVFVIAVS). Residues 218–237 (YAYILITILKMRSTEGRQKA) are Cytoplasmic-facing. The helical transmembrane segment at 238–258 (FSTCTSHLTAVTLYYGTITFI) threads the bilayer. Topologically, residues 259-271 (YVMPKSNYSTAQN) are extracellular. N-linked (GlcNAc...) asparagine glycosylation occurs at N265. Residues 272-292 (KILSVFYTVVIPMLNPLIYSL) traverse the membrane as a helical segment. At 293–310 (RNRDVKEALRKAIIRIFP) the chain is on the cytoplasmic side.

Belongs to the G-protein coupled receptor 1 family.

It is found in the cell membrane. Potential odorant receptor. This chain is Olfactory receptor 5P55, found in Mus musculus (Mouse).